A 370-amino-acid chain; its full sequence is Aspartate-semialdehyde dehydrogenase 1 (370 aa).

NADP(+) contacts are provided by residues 9–12, 36–37, and Gln72; these read RGMV and TS. Arg101 is a binding site for phosphate. Cys134 serves as the catalytic Acyl-thioester intermediate. At Cys134 the chain carries S-cysteinyl cysteine; in inhibited form. Gln161 serves as a coordination point for substrate. NADP(+)-binding positions include 164–165 and Pro192; that span reads SG. A substrate-binding site is contributed by Glu240. A phosphate-binding site is contributed by Lys243. Substrate is bound at residue Arg267. His274 functions as the Proton acceptor in the catalytic mechanism. NADP(+) is bound at residue Gln350.

It belongs to the aspartate-semialdehyde dehydrogenase family. Homodimer.

It catalyses the reaction L-aspartate 4-semialdehyde + phosphate + NADP(+) = 4-phospho-L-aspartate + NADPH + H(+). The protein operates within amino-acid biosynthesis; L-lysine biosynthesis via DAP pathway; (S)-tetrahydrodipicolinate from L-aspartate: step 2/4. It functions in the pathway amino-acid biosynthesis; L-methionine biosynthesis via de novo pathway; L-homoserine from L-aspartate: step 2/3. Its pathway is amino-acid biosynthesis; L-threonine biosynthesis; L-threonine from L-aspartate: step 2/5. Its activity is regulated as follows. Inhibited by S-methyl-L-cysteine sulfoxide in vitro, via the formation of a covalently bound cysteine at the active site Cys-134. Functionally, catalyzes the NADPH-dependent formation of L-aspartate-semialdehyde (L-ASA) by the reductive dephosphorylation of L-aspartyl-4-phosphate. This Vibrio cholerae serotype O1 (strain ATCC 39315 / El Tor Inaba N16961) protein is Aspartate-semialdehyde dehydrogenase 1 (asd1).